A 372-amino-acid polypeptide reads, in one-letter code: Glutamate 5-kinase (372 aa).

Residue Lys-6 participates in ATP binding. Ser-46, Asp-133, and Asn-145 together coordinate substrate. Residues 165–166 (TD) and 207–213 (TGGMYTK) each bind ATP. A PUA domain is found at 272–350 (SGRLFIDEGA…HEIEKILGYK (79 aa)).

Belongs to the glutamate 5-kinase family.

Its subcellular location is the cytoplasm. The enzyme catalyses L-glutamate + ATP = L-glutamyl 5-phosphate + ADP. Its pathway is amino-acid biosynthesis; L-proline biosynthesis; L-glutamate 5-semialdehyde from L-glutamate: step 1/2. Functionally, catalyzes the transfer of a phosphate group to glutamate to form L-glutamate 5-phosphate. In Thermoanaerobacter pseudethanolicus (strain ATCC 33223 / 39E) (Clostridium thermohydrosulfuricum), this protein is Glutamate 5-kinase.